We begin with the raw amino-acid sequence, 1354 residues long: Rho-associated protein kinase 1 (1354 aa).

Residue S2 is modified to N-acetylserine. The Protein kinase domain maps to 76 to 338 (YEVVKVIGRG…VEEIKRHLFF (263 aa)). Residues 82–90 (IGRGAFGEV) and K105 contribute to the ATP site. Residue D198 is the Proton acceptor of the active site. In terms of domain architecture, AGC-kinase C-terminal spans 341–409 (DQWAWETLRD…YSNRRYLPSA (69 aa)). An interaction with FHOD1 region spans residues 368 to 727 (FDDLEEDKGD…KKLKEEREAR (360 aa)). A coiled-coil region spans residues 422–692 (KSLQESLQKT…RLEQEVNEHK (271 aa)). The region spanning 479–556 (SAVSQIEKEK…LEEANDLLRT (78 aa)) is the REM-1 domain. The tract at residues 707 to 946 (EAKSVAMCEM…TVSRLEETNS (240 aa)) is SHROOM3 binding. A RhoBD domain is found at 949-1015 (TKDIEMLRKE…LAEIMNRKDF (67 aa)). The RHOA binding stretch occupies residues 998–1010 (LKTQAVNKLAEIM). The stretch at 1011 to 1102 (NRKDFKIDRK…KLLDLSDSTS (92 aa)) forms a coiled coil. Residues S1105 and S1108 each carry the phosphoserine modification. The auto-inhibitory stretch occupies residues 1115–1354 (NLPESRIEGW…VVKNTSGKTS (240 aa)). The 200-residue stretch at 1118-1317 (ESRIEGWLSV…WVTHLVKKIP (200 aa)) folds into the PH domain. The Phorbol-ester/DAG-type zinc-finger motif lies at 1228 to 1283 (GHEFIPTLYHFPANCEACAKPLWHVFKPPPALECRRCHVKCHRDHLDKKEDLISPC). Phosphoserine is present on S1328. The tract at residues 1333 to 1354 (STRSTANQSFRKVVKNTSGKTS) is disordered.

Belongs to the protein kinase superfamily. AGC Ser/Thr protein kinase family. As to quaternary structure, homodimer. Interacts with RHOA (activated by GTP), RHOB, RHOC, GEM, MYLC2B, RHOE, PPP1R12A, LIMK1, LIMK2, TSG101, CHORDC1, DAPK3, PFN1 and JIP3. Interacts with FHOD1 in a Src-dependent manner. Interacts with PTEN. Interacts with ITGB1BP1 (via N-terminus and PTB domain). Interacts with SHROOM3. Requires Mg(2+) as cofactor. Post-translationally, autophosphorylated on serine and threonine residues. Cleaved by caspase-3 during apoptosis. This leads to constitutive activation of the kinase and membrane blebbing. As to expression, highly expressed in brain, heart, lung, liver, stomach, spleen, kidney, testis, muscle, embryo and placenta.

The protein localises to the cytoplasm. It localises to the cytoskeleton. Its subcellular location is the microtubule organizing center. The protein resides in the centrosome. It is found in the centriole. The protein localises to the golgi apparatus membrane. It localises to the cell projection. Its subcellular location is the bleb. The protein resides in the cell membrane. It is found in the lamellipodium. The protein localises to the ruffle. It catalyses the reaction L-seryl-[protein] + ATP = O-phospho-L-seryl-[protein] + ADP + H(+). It carries out the reaction L-threonyl-[protein] + ATP = O-phospho-L-threonyl-[protein] + ADP + H(+). With respect to regulation, activated by RHOA binding. Inhibited by Y-27632. Functionally, protein kinase which is a key regulator of the actin cytoskeleton and cell polarity. Involved in regulation of smooth muscle contraction, actin cytoskeleton organization, stress fiber and focal adhesion formation, neurite retraction, cell adhesion and motility via phosphorylation of DAPK3, GFAP, LIMK1, LIMK2, MYL9/MLC2, TPPP, PFN1 and PPP1R12A. Phosphorylates FHOD1 and acts synergistically with it to promote SRC-dependent non-apoptotic plasma membrane blebbing. Phosphorylates JIP3 and regulates the recruitment of JNK to JIP3 upon UVB-induced stress. Acts as a suppressor of inflammatory cell migration by regulating PTEN phosphorylation and stability. Acts as a negative regulator of VEGF-induced angiogenic endothelial cell activation. Required for centrosome positioning and centrosome-dependent exit from mitosis. Plays a role in terminal erythroid differentiation. Inhibits podocyte motility via regulation of actin cytoskeletal dynamics and phosphorylation of CFL1. Promotes keratinocyte terminal differentiation. Involved in osteoblast compaction through the fibronectin fibrillogenesis cell-mediated matrix assembly process, essential for osteoblast mineralization. May regulate closure of the eyelids and ventral body wall by inducing the assembly of actomyosin bundles. The protein is Rho-associated protein kinase 1 (Rock1) of Mus musculus (Mouse).